A 328-amino-acid chain; its full sequence is Stress response kinase A (328 aa).

Asp-201 functions as the Proton acceptor in the catalytic mechanism. Residues Asn-206 and Asp-217 each contribute to the Mg(2+) site. Asp-217 is an active-site residue.

The protein belongs to the SrkA/RdoA protein kinase family. As to quaternary structure, monomer. It depends on Mg(2+) as a cofactor.

It localises to the cytoplasm. It catalyses the reaction L-seryl-[protein] + ATP = O-phospho-L-seryl-[protein] + ADP + H(+). The enzyme catalyses L-threonyl-[protein] + ATP = O-phospho-L-threonyl-[protein] + ADP + H(+). Functionally, a protein kinase that phosphorylates Ser and Thr residues. Probably acts to suppress the effects of stress linked to accumulation of reactive oxygen species. Probably involved in the extracytoplasmic stress response. This chain is Stress response kinase A, found in Salmonella choleraesuis (strain SC-B67).